A 444-amino-acid polypeptide reads, in one-letter code: L-ornithine N(5)-monooxygenase (444 aa).

Residues E40–H48 and Q59 each bind FAD. K64 contributes to the substrate binding site. V125 is an FAD binding site. Residues A211 to S214 and R236 contribute to the NADP(+) site. Substrate is bound by residues N250–F253 and N280. NADP(+) is bound at residue N280–A282. Residue R408 to C410 coordinates FAD. Basic residues predominate over residues S420–T432. The disordered stretch occupies residues S420–D444.

This sequence belongs to the lysine N(6)-hydroxylase/L-ornithine N(5)-oxygenase family. FAD serves as cofactor.

It catalyses the reaction L-ornithine + NADPH + O2 = N(5)-hydroxy-L-ornithine + NADP(+) + H2O. It participates in siderophore biosynthesis; ornibactin biosynthesis. In terms of biological role, catalyzes the conversion of L-ornithine to N(5)-hydroxyornithine, the first step in the biosynthesis of all hydroxamate-containing siderophores, such as ornibactin. This chain is L-ornithine N(5)-monooxygenase, found in Burkholderia cepacia (Pseudomonas cepacia).